The chain runs to 1116 residues: MSLNLSAEEQTAFDQLFKIADKQDIGVITGEEAVPFLEKSGLAPQVLGQIWQIADAENRGFLTFSGFVIAMRLVALAQEKLPFDYKKSGKIPYFADIHISGVDSSKFVQLNRPNNVSSGDGSDGSFLPPISSDEMTRYQQMFTTVCPTDGLMDGDRASSIFGRAPLSTEILARVWNLVDTHKRGALDIREFNTGMHIINLLLNGSLKSPPVSISPSFIASAASTSSVSAPSQYPGLSRSPPVQAPNIPVSDPWAIPSQDLTSFCQLFSNVDKAHKGYVSGSEAYSFFLASKLPEDVLAQIWDLSDTNSNGKLNIGEFCISLYLIKLKLSGKELPKVLPSSMLSSVAPLMQKSKSVPTSIPSVVPANISSPNPNPTLAPNPTGPSRVTSGTEDLLSLDATPFSPTLAPQHTSSNATKHSAPPVTKSAPFPVVSPLQLNHTPGFPTSPAAKPNSPTSTFFPQSSFGQTIAKNTMDKPSAVRTSVPSQLAAPIPQVASAEQLKLAAEVPKLESQLSQVKKSNDDLQKSSRDVAANLSDVKAKVSEIRKAYDEELAKAKQISLDIETNKAQTEQVNREYSILEATLNALQKQNKQKGEVLEQVVAESEAAKNMVESSNASIQQLKSEVADKEQTLAQLHLQLDEMTQRLVSLDEESKAVSQRKLDLEYKINNSKTQLATATEEYHEHSKQLEAEKQELSKLEDGLKSVNLTEEAPKPEVDSTPRFPSFTSNGITTDKPTLPDTTSSVPTQHNSFDAMHNTLRSPSLNSNNSSAHASTVSRNPFHNLKISGASSPVSNFWESEFASAVFPRSISKTTSLSVNNSSVNPSLDSEPVQLSNMEEPQHQDSSVVDVSTSASQRGSPVLSDLSKLTGSARNTAEPVENTSAEPIENTSAPTPFEIANKQQATEPISAPFATETISTPAPVKPPVPPSRRDRSAQDGVVQQATPHIQDEFPPIQFNEIDDDESSSDEEPPMSNLSPQISIGSVTNYTSAVTELPDPNHQLEMSTTTHVQHPNSETIPSSTENQYFDTTSGAFEANSNTEVTVNSNEVSQPFDFDTANESDNDDDELPVQQVVSGSLANDAFNVDDEFDNQFANLQAAEIKDDDNSSTDEEEHAGHH.

4 EF-hand domains span residues 8 to 43 (EEQT…SGLA), 42 to 77 (LAPQ…VALA), 166 to 201 (LSTE…INLL), and 292 to 327 (LPED…IKLK). EH domains lie at 9–106 (EQTA…DSSK), 134–224 (EMTR…AAST), and 259–348 (DLTS…VAPL). Positions 305, 307, 309, 311, and 316 each coordinate Ca(2+). Disordered stretches follow at residues 360–454 (PSVV…NSPT), 703–774 (SVNL…ASTV), 812–890 (TSLS…NTSA), 909–978 (PFAT…SPQI), 1004–1024 (TTTH…ENQY), 1044–1066 (SNEV…DDEL), and 1095–1116 (QAAE…AGHH). The span at 371–381 (NPNPTLAPNPT) shows a compositional bias: pro residues. Residues 401 to 416 (FSPTLAPQHTSSNATK) show a composition bias toward polar residues. Residues 565 to 707 (KAQTEQVNRE…EDGLKSVNLT (143 aa)) are a coiled coil. Polar residues predominate over residues 723–749 (SFTSNGITTDKPTLPDTTSSVPTQHNS). 2 stretches are compositionally biased toward low complexity: residues 755 to 774 (NTLR…ASTV) and 812 to 827 (TSLS…SLDS). Residues 864-890 (SKLTGSARNTAEPVENTSAEPIENTSA) show a composition bias toward polar residues. Acidic residues predominate over residues 957 to 969 (EIDDDESSSDEEP). Composition is skewed to acidic residues over residues 1055–1066 (TANESDNDDDEL) and 1104–1116 (NSST…AGHH).

Its subcellular location is the cytoplasm. It is found in the cytoskeleton. This is an uncharacterized protein from Schizosaccharomyces pombe (strain 972 / ATCC 24843) (Fission yeast).